The following is a 213-amino-acid chain: NADH-quinone oxidoreductase subunit I (213 aa).

4Fe-4S ferredoxin-type domains are found at residues 74–103 and 113–142; these read RFIE…METS and ENYS…HGTE. [4Fe-4S] cluster is bound by residues cysteine 83, cysteine 86, cysteine 89, cysteine 93, cysteine 122, cysteine 125, cysteine 128, and cysteine 132.

This sequence belongs to the complex I 23 kDa subunit family. As to quaternary structure, NDH-1 is composed of 14 different subunits. Subunits NuoA, H, J, K, L, M, N constitute the membrane sector of the complex. The cofactor is [4Fe-4S] cluster.

It localises to the cell inner membrane. It carries out the reaction a quinone + NADH + 5 H(+)(in) = a quinol + NAD(+) + 4 H(+)(out). Functionally, NDH-1 shuttles electrons from NADH, via FMN and iron-sulfur (Fe-S) centers, to quinones in the respiratory chain. The immediate electron acceptor for the enzyme in this species is believed to be ubiquinone. Couples the redox reaction to proton translocation (for every two electrons transferred, four hydrogen ions are translocated across the cytoplasmic membrane), and thus conserves the redox energy in a proton gradient. This chain is NADH-quinone oxidoreductase subunit I, found in Campylobacter jejuni subsp. jejuni serotype O:23/36 (strain 81-176).